Reading from the N-terminus, the 509-residue chain is Lysine--tRNA ligase (509 aa).

Mg(2+)-binding residues include Glu-419 and Glu-426.

It belongs to the class-II aminoacyl-tRNA synthetase family. Homodimer. It depends on Mg(2+) as a cofactor.

Its subcellular location is the cytoplasm. The enzyme catalyses tRNA(Lys) + L-lysine + ATP = L-lysyl-tRNA(Lys) + AMP + diphosphate. The polypeptide is Lysine--tRNA ligase (Methylobacillus flagellatus (strain ATCC 51484 / DSM 6875 / VKM B-1610 / KT)).